The chain runs to 434 residues: Glutamate/glutamine/aspartate/asparagine transport system permease protein BztC (434 aa).

10 helical membrane passes run 41–61, 113–133, 135–155, 156–176, 180–200, 227–247, 272–292, 298–318, 360–380, and 398–418; these read LTVF…PWLL, LFVT…DALP, KLIW…WGGP, IWGP…FTAL, LGVP…WLYA, FLLA…LGIL, GVPL…FLPP, LILR…AEVI, IVSS…VGLF, and GTYW…NFSM. An ABC transmembrane type-1 domain is found at 227 to 422; that stretch reads FLLALVIGVT…LFNFSMSRYS (196 aa).

The protein belongs to the binding-protein-dependent transport system permease family. HisMQ subfamily. BztB and BztC form a heterodimer which can form a membrane complex with a homodimer of BztD.

Its subcellular location is the cell inner membrane. In terms of biological role, part of a binding-protein-dependent transport system for glutamate, glutamine, aspartate and asparagine. Probably responsible for the translocation of the substrate across the membrane. The polypeptide is Glutamate/glutamine/aspartate/asparagine transport system permease protein BztC (bztC) (Rhodobacter capsulatus (strain ATCC BAA-309 / NBRC 16581 / SB1003)).